The following is a 413-amino-acid chain: MALVMHTYKGNKGANKALIAAEYAGVKIEESADFQMGVTNKSPEFLKMNPIGKVPVLETPEGPIFESNAIARYVSRKNGDNSLNGSSLIEYAHIEQWIDFSSLEIDANMLKWFAPRMGYAPFSAPAEEAAISALKRGLEALNTHLASNTFLVGHSVTLADIVTICNLNLGFATVMTKKFTSAFPHVERYFWTMVNQPEFKKVLGDAKQTEAVPPVPTKKAPQPAKPKEEPKKAAPVAEAPKPAEEEEAPKPKAKNPLDLLPPSPMVLDDWKRLYSNTKSNFREVAIKGFWDMYDPEGYSLWFCDYKYNDENMVSFVTLNKVGGFLQRMDLARKYSFGKMLICGSEGPFKVKGLWLFRGPEIPKFIMDEVYDMELYEWTKVDISDEAQKERVSQMIEDAEPFEGEALLDAKCFK.

The region spanning 1–82 is the GST N-terminal domain; that stretch reads MALVMHTYKG…YVSRKNGDNS (82 aa). Residues 87–215 enclose the GST C-terminal domain; sequence SLIEYAHIEQ…AKQTEAVPPV (129 aa). The segment at 207–260 is disordered; the sequence is KQTEAVPPVPTKKAPQPAKPKEEPKKAAPVAEAPKPAEEEEAPKPKAKNPLDLL. The 161-residue stretch at 253–413 folds into the EF-1-gamma C-terminal domain; sequence AKNPLDLLPP…EALLDAKCFK (161 aa).

As to quaternary structure, EF-1 is composed of four subunits: alpha, beta, delta, and gamma.

Functionally, probably plays a role in anchoring the complex to other cellular components. The protein is Probable elongation factor 1-gamma 2 of Arabidopsis thaliana (Mouse-ear cress).